We begin with the raw amino-acid sequence, 212 residues long: ATP-dependent Clp protease proteolytic subunit (212 aa).

Serine 106 functions as the Nucleophile in the catalytic mechanism. Residue histidine 131 is part of the active site.

The protein belongs to the peptidase S14 family. Fourteen ClpP subunits assemble into 2 heptameric rings which stack back to back to give a disk-like structure with a central cavity, resembling the structure of eukaryotic proteasomes.

The protein localises to the cytoplasm. The catalysed reaction is Hydrolysis of proteins to small peptides in the presence of ATP and magnesium. alpha-casein is the usual test substrate. In the absence of ATP, only oligopeptides shorter than five residues are hydrolyzed (such as succinyl-Leu-Tyr-|-NHMec, and Leu-Tyr-Leu-|-Tyr-Trp, in which cleavage of the -Tyr-|-Leu- and -Tyr-|-Trp bonds also occurs).. In terms of biological role, cleaves peptides in various proteins in a process that requires ATP hydrolysis. Has a chymotrypsin-like activity. Plays a major role in the degradation of misfolded proteins. The protein is ATP-dependent Clp protease proteolytic subunit of Rhodopseudomonas palustris (strain HaA2).